The primary structure comprises 308 residues: Protein translocase subunit SecF (308 aa).

Helical transmembrane passes span 28-48 (SIILSLISFIWIGIYKFNFGI), 140-160 (IEAGAMAMLFSFLAIMVYIWV), 164-184 (WYFGFGILIALVHDVILALGF), 194-214 (LSTIAAVLTIIGYSVNDSVVI), 246-266 (ILTVITTLLANLALILFGGEA), and 272-292 (ILVFFGIIVGTYSSIFISAPI).

Belongs to the SecD/SecF family. SecF subfamily. In terms of assembly, forms a complex with SecD. Part of the essential Sec protein translocation apparatus which comprises SecA, SecYEG and auxiliary proteins SecDF-YajC and YidC.

Its subcellular location is the cell inner membrane. Its function is as follows. Part of the Sec protein translocase complex. Interacts with the SecYEG preprotein conducting channel. SecDF uses the proton motive force (PMF) to complete protein translocation after the ATP-dependent function of SecA. The chain is Protein translocase subunit SecF from Rickettsia rickettsii (strain Sheila Smith).